A 399-amino-acid chain; its full sequence is MLAQSCCLRLLILLLLFKSTCSVREKSQKYFKNRKLRERRIKLYGTKKTEIQPLLISTWNYTDANLQAWSVLQQGPRRTRMAVMQGCMACQNQRCGRLLAGGSSPDSEGTLTLEAAIMDGEHLEYGAVAAMEGARNAILVADAVLRYTKHSVLVGKSATKFARSLGYKEEFLTDGRTKSVWKKWRSNGCQPNFWRDVRPPPTENCGPYTPLPEHLHQHPMHQEYAITQGQHDQLAFLALDAEGKFHVASQSSGAQFRIPGRVGDAAVPGAGIYADNDVGGAVASGDGDVLMRHLPAFLAVEAMRAGKRPDQAAKWVVQRLLRHNTEFNGAVVVVNRRGIYAAACAGLDEFHFVVSGGKGYLIMARVERIKCLERESEVVDDGPKGLFPTIPEKQAVPRG.

An N-terminal signal peptide occupies residues M1–S22. Cystine bridges form between C90–C95, C189–C205, and C344–C371.

The protein belongs to the Ntn-hydrolase family.

The chain is L-asparaginase-like protein GE13669 from Drosophila yakuba (Fruit fly).